The sequence spans 57 residues: UPF0057 membrane protein T23F2.4 (57 aa).

Transmembrane regions (helical) follow at residues 3–23 (ITCMDIPKFLFALLLPPVGVF) and 36–56 (ILLTILGYIPGIIYACYIILA).

Belongs to the UPF0057 (PMP3) family.

The protein localises to the membrane. This is UPF0057 membrane protein T23F2.4 from Caenorhabditis elegans.